Reading from the N-terminus, the 188-residue chain is dCTP deaminase (188 aa).

DCTP is bound by residues 111 to 116, 135 to 137, Gln-156, Tyr-170, and Gln-180; these read KSTYAR and TLE. Glu-137 (proton donor/acceptor) is an active-site residue.

It belongs to the dCTP deaminase family. Homotrimer.

It carries out the reaction dCTP + H2O + H(+) = dUTP + NH4(+). It functions in the pathway pyrimidine metabolism; dUMP biosynthesis; dUMP from dCTP (dUTP route): step 1/2. Functionally, catalyzes the deamination of dCTP to dUTP. This is dCTP deaminase from Janthinobacterium sp. (strain Marseille) (Minibacterium massiliensis).